The chain runs to 148 residues: D-aminoacyl-tRNA deacylase (148 aa).

A Gly-cisPro motif, important for rejection of L-amino acids motif is present at residues 137–138 (GP).

It belongs to the DTD family. As to quaternary structure, homodimer.

It localises to the cytoplasm. It carries out the reaction glycyl-tRNA(Ala) + H2O = tRNA(Ala) + glycine + H(+). It catalyses the reaction a D-aminoacyl-tRNA + H2O = a tRNA + a D-alpha-amino acid + H(+). Its function is as follows. An aminoacyl-tRNA editing enzyme that deacylates mischarged D-aminoacyl-tRNAs. Also deacylates mischarged glycyl-tRNA(Ala), protecting cells against glycine mischarging by AlaRS. Acts via tRNA-based rather than protein-based catalysis; rejects L-amino acids rather than detecting D-amino acids in the active site. By recycling D-aminoacyl-tRNA to D-amino acids and free tRNA molecules, this enzyme counteracts the toxicity associated with the formation of D-aminoacyl-tRNA entities in vivo and helps enforce protein L-homochirality. The chain is D-aminoacyl-tRNA deacylase from Lacticaseibacillus casei (strain BL23) (Lactobacillus casei).